The sequence spans 594 residues: Segmentation polarity homeobox protein engrailed (594 aa).

Disordered regions lie at residues 1 to 64 (MALE…TRDE), 76 to 127 (IKQE…PASI), 141 to 164 (KATAEQQQQPHPQPPAIREPISPG), 198 to 217 (HYYQPSPSHPQPIVPQPQRA), 231 to 299 (ISKS…PTGS), 387 to 458 (AGTG…GSEN), and 474 to 501 (DRPSSGPRYRRTKQPKEKGDSEEKRPRT). The span at 22 to 60 (SQSPTSTTTVTMATASPVPACTTTTTTTSTSGASAASSP) shows a compositional bias: low complexity. Positions 92 to 112 (PHHHQHPHHHQLPHHPHHQHH) are enriched in basic residues. Residues 151 to 164 (HPQPPAIREPISPG) show a composition bias toward pro residues. The segment covering 237–247 (LCSSNGSSSAT) has biased composition (polar residues). Composition is skewed to low complexity over residues 278 to 299 (ASPSSASSAMTTPVTTSSPTGS) and 387 to 402 (AGTGSLNGSGSAANGA). Polar residues-rich tracts occupy residues 426–436 (SSETNGSSSQD) and 448–458 (ETSSTKDGSEN). Positions 487 to 499 (QPKEKGDSEEKRP) are enriched in basic and acidic residues. A DNA-binding region (homeobox) is located at residues 496 to 555 (EKRPRTAFSNAQLQRLKNEFNENRYLTEKRRQTLSAELGLNEAQIKIWFQNKRAKIKKSS).

It belongs to the engrailed homeobox family.

It is found in the nucleus. Its function is as follows. This protein specifies the body segmentation pattern. It is required for the development of the central nervous system. Transcriptional regulator that repress activated promoters. This is Segmentation polarity homeobox protein engrailed (en) from Anopheles gambiae (African malaria mosquito).